A 122-amino-acid polypeptide reads, in one-letter code: MLKKPDRNALRDKRRRRVRKKIRGTAERPRLNVFRSLQNIYAQIIDDDRGVTLVSASTLAPELKGKLPSGGNTAAAAAVGELLAKKAIEAGIKRVVFDRAGYVYHGRVKALAEAARAGGLEF.

Basic and acidic residues predominate over residues 1–11 (MLKKPDRNALR). Positions 1-22 (MLKKPDRNALRDKRRRRVRKKI) are disordered. Residues 12 to 22 (DKRRRRVRKKI) are compositionally biased toward basic residues.

It belongs to the universal ribosomal protein uL18 family. As to quaternary structure, part of the 50S ribosomal subunit; part of the 5S rRNA/L5/L18/L25 subcomplex. Contacts the 5S and 23S rRNAs.

Its function is as follows. This is one of the proteins that bind and probably mediate the attachment of the 5S RNA into the large ribosomal subunit, where it forms part of the central protuberance. This is Large ribosomal subunit protein uL18 from Pelotomaculum thermopropionicum (strain DSM 13744 / JCM 10971 / SI).